Consider the following 336-residue polypeptide: Glycerol-3-phosphate dehydrogenase [NAD(P)+] (336 aa).

The NADPH site is built by S16, Y17, H37, and K111. Residues K111, G140, and T142 each contribute to the sn-glycerol 3-phosphate site. A144 contacts NADPH. The sn-glycerol 3-phosphate site is built by K196, D249, S259, R260, and N261. Catalysis depends on K196, which acts as the Proton acceptor. NADPH is bound at residue R260. Residues V284 and E286 each coordinate NADPH.

The protein belongs to the NAD-dependent glycerol-3-phosphate dehydrogenase family.

It is found in the cytoplasm. The enzyme catalyses sn-glycerol 3-phosphate + NAD(+) = dihydroxyacetone phosphate + NADH + H(+). It catalyses the reaction sn-glycerol 3-phosphate + NADP(+) = dihydroxyacetone phosphate + NADPH + H(+). It participates in membrane lipid metabolism; glycerophospholipid metabolism. Its function is as follows. Catalyzes the reduction of the glycolytic intermediate dihydroxyacetone phosphate (DHAP) to sn-glycerol 3-phosphate (G3P), the key precursor for phospholipid synthesis. The polypeptide is Glycerol-3-phosphate dehydrogenase [NAD(P)+] (Actinobacillus pleuropneumoniae serotype 5b (strain L20)).